A 456-amino-acid chain; its full sequence is Alcohol acyltransferase 1 (456 aa).

Residues H166 and D382 each act as proton acceptor in the active site.

It belongs to the plant acyltransferase family. As to expression, expressed in fruit.

It catalyses the reaction 3-(methylsulfanyl)propanoyl-CoA + butan-1-ol = butyl 3-(methylsulfanyl)propanoate + CoA. It carries out the reaction ethanol + benzoyl-CoA = ethyl benzoate + CoA. The catalysed reaction is butan-1-ol + benzoyl-CoA = butyl benzoate + CoA. The enzyme catalyses 2-(methylsulfanyl)acetyl-CoA + butan-1-ol = butyl 2-(methylsulfanyl)acetate + CoA. In terms of biological role, involved in the biosynthesis of volatile esters which confer kiwifruit flavor. Alcohol acyl transferase that can use a wide range of alcohols as substrate to produce esters. Exhibits benzoyl-CoA:alcohol O-acyltransferase activity. The sequence is that of Alcohol acyltransferase 1 from Actinidia deliciosa (Kiwi).